A 349-amino-acid chain; its full sequence is METPQPDKTGMHILLKLASLVVILAGIHAAADIIVQLLLALFFAIVLNPLVTWFIRRGVQRPVAITIVVVVMLIALTALVGVLAASFNEFISMLPKFNKELTRKLFKLQEMLPFLNLHMSPERMLQRMDSEKVVTFTTALMTGLSGAMASVLLLVMTVVFMLFEVRHVPYKMRFALNNPQIHIAGLHRALKGVSHYLALKTLLSLWTGVIVWLGLELMGVQFALMWAVLAFLLNYVPNIGAVISAVPPMIQVLLFNGVYECILVGALFLVVHMVIGNILEPRMMGHRLGMSTMVVFLSLLIWGWLLGPVGMLLSVPLTSVCKIWMETTKGGSKLAILLGPGRPKSRLPG.

The Cytoplasmic portion of the chain corresponds to 1–10 (METPQPDKTG). A helical membrane pass occupies residues 11–31 (MHILLKLASLVVILAGIHAAA). Position 32 (Asp32) is a topological domain, periplasmic. The chain crosses the membrane as a helical span at residues 33-53 (IIVQLLLALFFAIVLNPLVTW). The Cytoplasmic portion of the chain corresponds to 54-62 (FIRRGVQRP). The helical transmembrane segment at 63-83 (VAITIVVVVMLIALTALVGVL) threads the bilayer. At 84–142 (AASFNEFISMLPKFNKELTRKLFKLQEMLPFLNLHMSPERMLQRMDSEKVVTFTTALMT) the chain is on the periplasmic side. The chain crosses the membrane as a helical span at residues 143–163 (GLSGAMASVLLLVMTVVFMLF). The Cytoplasmic segment spans residues 164 to 208 (EVRHVPYKMRFALNNPQIHIAGLHRALKGVSHYLALKTLLSLWTG). Residues 209–229 (VIVWLGLELMGVQFALMWAVL) form a helical membrane-spanning segment. Residues 230–234 (AFLLN) lie on the Periplasmic side of the membrane. A helical transmembrane segment spans residues 235 to 255 (YVPNIGAVISAVPPMIQVLLF). Residues 256–257 (NG) are Cytoplasmic-facing. The chain crosses the membrane as a helical span at residues 258–278 (VYECILVGALFLVVHMVIGNI). The Periplasmic portion of the chain corresponds to 279-292 (LEPRMMGHRLGMST). Residues 293 to 313 (MVVFLSLLIWGWLLGPVGMLL) traverse the membrane as a helical segment. Residues 314 to 349 (SVPLTSVCKIWMETTKGGSKLAILLGPGRPKSRLPG) are Cytoplasmic-facing.

This sequence belongs to the autoinducer-2 exporter (AI-2E) (TC 2.A.86) family.

Its subcellular location is the cell inner membrane. The chain is Putative transport protein YhhT (yhhT) from Escherichia coli O157:H7.